A 128-amino-acid chain; its full sequence is Small ribosomal subunit protein uS11 (128 aa).

This sequence belongs to the universal ribosomal protein uS11 family. Part of the 30S ribosomal subunit. Interacts with proteins S7 and S18. Binds to IF-3.

In terms of biological role, located on the platform of the 30S subunit, it bridges several disparate RNA helices of the 16S rRNA. Forms part of the Shine-Dalgarno cleft in the 70S ribosome. This chain is Small ribosomal subunit protein uS11, found in Synechococcus sp. (strain JA-2-3B'a(2-13)) (Cyanobacteria bacterium Yellowstone B-Prime).